Here is a 254-residue protein sequence, read N- to C-terminus: Phosphoribosylaminoimidazole-succinocarboxamide synthase (254 aa).

The protein belongs to the SAICAR synthetase family.

The catalysed reaction is 5-amino-1-(5-phospho-D-ribosyl)imidazole-4-carboxylate + L-aspartate + ATP = (2S)-2-[5-amino-1-(5-phospho-beta-D-ribosyl)imidazole-4-carboxamido]succinate + ADP + phosphate + 2 H(+). Its pathway is purine metabolism; IMP biosynthesis via de novo pathway; 5-amino-1-(5-phospho-D-ribosyl)imidazole-4-carboxamide from 5-amino-1-(5-phospho-D-ribosyl)imidazole-4-carboxylate: step 1/2. The polypeptide is Phosphoribosylaminoimidazole-succinocarboxamide synthase (Gluconacetobacter diazotrophicus (strain ATCC 49037 / DSM 5601 / CCUG 37298 / CIP 103539 / LMG 7603 / PAl5)).